The chain runs to 123 residues: Large ribosomal subunit protein bL12 (123 aa).

Belongs to the bacterial ribosomal protein bL12 family. In terms of assembly, homodimer. Part of the ribosomal stalk of the 50S ribosomal subunit. Forms a multimeric L10(L12)X complex, where L10 forms an elongated spine to which 2 to 4 L12 dimers bind in a sequential fashion. Binds GTP-bound translation factors.

Its function is as follows. Forms part of the ribosomal stalk which helps the ribosome interact with GTP-bound translation factors. Is thus essential for accurate translation. In Neisseria perflava, this protein is Large ribosomal subunit protein bL12.